Reading from the N-terminus, the 657-residue chain is Glycogen debranching enzyme (657 aa).

Asp-336 acts as the Nucleophile in catalysis. The Proton donor role is filled by Glu-371. Residues 460–479 (ANGEENRDGTNNNHSFNHGI) form a disordered region.

It belongs to the glycosyl hydrolase 13 family.

It carries out the reaction Hydrolysis of (1-&gt;6)-alpha-D-glucosidic linkages to branches with degrees of polymerization of three or four glucose residues in limit dextrin.. The protein operates within glycan degradation; glycogen degradation. Functionally, removes maltotriose and maltotetraose chains that are attached by 1,6-alpha-linkage to the limit dextrin main chain, generating a debranched limit dextrin. The sequence is that of Glycogen debranching enzyme from Enterobacter sp. (strain 638).